Here is a 163-residue protein sequence, read N- to C-terminus: Small ribosomal subunit protein uS5 (163 aa).

The 64-residue stretch at 11–74 (LTDRVVHINR…EQAKKNLIRV (64 aa)) folds into the S5 DRBM domain.

This sequence belongs to the universal ribosomal protein uS5 family. As to quaternary structure, part of the 30S ribosomal subunit. Contacts proteins S4 and S8.

Functionally, with S4 and S12 plays an important role in translational accuracy. Located at the back of the 30S subunit body where it stabilizes the conformation of the head with respect to the body. The polypeptide is Small ribosomal subunit protein uS5 (Syntrophotalea carbinolica (strain DSM 2380 / NBRC 103641 / GraBd1) (Pelobacter carbinolicus)).